We begin with the raw amino-acid sequence, 72 residues long: Crustacean hyperglycemic hormone (72 aa).

Residue Q1 is modified to Pyrrolidone carboxylic acid. F3 carries the post-translational modification D-phenylalanine; in form CHH-II. 3 disulfide bridges follow: C7/C43, C23/C39, and C26/C52. V72 is subject to Valine amide.

Stereoinversion of L-Phe (in CHH-I) to D-Phe (in CHH-II) the two forms are present in a ratio 3:1 (CHH-I/CHH-II). As to expression, produced by the medulla terminalis X-organ in the eyestalks and transported to the sinus gland where they are stored and released.

The protein localises to the secreted. Its function is as follows. Hormone found in the sinus gland of isopods and decapods which controls the blood sugar level. Has a secretagogue action over the amylase released from the midgut gland. May act as a stress hormone and may be involved in the control of molting and reproduction. The protein is Crustacean hyperglycemic hormone of Procambarus bouvieri (Mexican crayfish).